Here is a 369-residue protein sequence, read N- to C-terminus: tRNA pseudouridine synthase D (369 aa).

The active-site Nucleophile is the Asp-80. In terms of domain architecture, TRUD spans 156–318 (GIPNWFGEQR…LKQERRALRL (163 aa)).

The protein belongs to the pseudouridine synthase TruD family.

It catalyses the reaction uridine(13) in tRNA = pseudouridine(13) in tRNA. Its function is as follows. Responsible for synthesis of pseudouridine from uracil-13 in transfer RNAs. This chain is tRNA pseudouridine synthase D, found in Xanthomonas oryzae pv. oryzae (strain KACC10331 / KXO85).